The chain runs to 607 residues: MFPQKITLWLYPLGLFANLFFGTAFCVQWSLTRKKGYSVVPKIFWYLSGTGAVFMICHGFIQSQYPIALLHSFNLIIYFRNLNIASLNPLPVSKIASLLVSVATAITVSFAIGTRYLPHMTWMASPNILHLNLPEASLSWQLIGCIGLTIFSLRFFIQWFYLEYKNQSALPAPFWKASLLGGSICLLYFLRTGDLVNVLCYGCGLFPSLANLRIASREAFRKPFSNSCFISAGEHSGDTLGGNLLKEMHAKYPDIHCFGVGGPQMRAQNFHALFAMEKFQVSGFWEVLLALPKLWYRYQLLYRNILKTNPRTVICIDFPDFHFLLIKKLRSRGYKGKIVHYVCPSIWAWRPSRKTVLEKYLDLLLLILPFEQNLFKDSALRTVYLGHPLSETIKSFSPNLNWKDQLHLPTDKPFIAAFPGSRRSDILRNLTIQVQAFQASSLASTHHLLVSSANPEYDHLILEVLQQNRCLHSHIVPSQFRYELMRECDFALAKCGTIVLETALNLTPTIVTCQLRPLDTFLAKYIFNIILPAYSLPNIILGRTIFPEFIGGKKDFQYEDVAAALNILKTSQAQEKQKDSCRDVYQAINESASSMKECLSLIFETAS.

A unknown region spans residues 1 to 224 (MFPQKITLWL…ASREAFRKPF (224 aa)). The interval 225–607 (SNSCFISAGE…CLSLIFETAS (383 aa)) is lipid-A-disaccharide synthase.

In the C-terminal section; belongs to the LpxB family.

It catalyses the reaction a lipid X + a UDP-2-N,3-O-bis[(3R)-3-hydroxyacyl]-alpha-D-glucosamine = a lipid A disaccharide + UDP + H(+). It functions in the pathway bacterial outer membrane biogenesis; LPS lipid A biosynthesis. Condensation of UDP-2,3-diacylglucosamine and 2,3-diacylglucosamine-1-phosphate to form lipid A disaccharide, a precursor of lipid A, a phosphorylated glycolipid that anchors the lipopolysaccharide to the outer membrane of the cell. This Chlamydia trachomatis serovar A (strain ATCC VR-571B / DSM 19440 / HAR-13) protein is Lipid-A-disaccharide synthase (lpxB).